We begin with the raw amino-acid sequence, 339 residues long: Agamous-like MADS-box protein AGL86 (339 aa).

The region spanning 1 to 60 is the MADS-box domain; sequence MRSKIKLSLIANKTSRRTTFRKRKGGITNKLHELTTLCGVKACAVISSPYENPVVWPSTE. Residues 86 to 112 adopt a coiled-coil conformation; the sequence is TYLQDKITKETKKLESLRRENRESQLR.

As to quaternary structure, interacts with AGL61/DIANA and AGL62.

The protein resides in the nucleus. Functionally, probable transcription factor. This Arabidopsis thaliana (Mouse-ear cress) protein is Agamous-like MADS-box protein AGL86 (AGL86).